We begin with the raw amino-acid sequence, 103 residues long: U-scoloptoxin(24)-Er1a (103 aa).

The N-terminal stretch at 1 to 23 is a signal peptide; sequence MVKSLHCLIGIVLFLAILNAGNG.

It belongs to the scoloptoxin-24 family. Post-translationally, contains 1 disulfide bond. In terms of tissue distribution, expressed by the venom gland.

Its subcellular location is the secreted. The sequence is that of U-scoloptoxin(24)-Er1a from Ethmostigmus rubripes (Giant centipede).